The sequence spans 148 residues: Cytochrome c-type biogenesis protein CcmE (148 aa).

Over 1–7 (MKPRSKR) the chain is Cytoplasmic. Residues 8–28 (LLLVAGAVALLVGAVALVLNA) traverse the membrane as a helical; Signal-anchor for type II membrane protein segment. Over 29–148 (FQQNLVFFHT…AQKAAQTVQQ (120 aa)) the chain is Periplasmic. Residues histidine 123 and tyrosine 127 each coordinate heme.

The protein belongs to the CcmE/CycJ family.

It is found in the cell inner membrane. Its function is as follows. Heme chaperone required for the biogenesis of c-type cytochromes. Transiently binds heme delivered by CcmC and transfers the heme to apo-cytochromes in a process facilitated by CcmF and CcmH. In Aromatoleum aromaticum (strain DSM 19018 / LMG 30748 / EbN1) (Azoarcus sp. (strain EbN1)), this protein is Cytochrome c-type biogenesis protein CcmE.